A 251-amino-acid polypeptide reads, in one-letter code: ATP synthase subunit a (251 aa).

Helical transmembrane passes span valine 34 to serine 54, phenylalanine 93 to phenylalanine 113, isoleucine 130 to serine 150, leucine 195 to leucine 215, and glycine 216 to glycine 236.

Belongs to the ATPase A chain family. As to quaternary structure, F-type ATPases have 2 components, CF(1) - the catalytic core - and CF(0) - the membrane proton channel. CF(1) has five subunits: alpha(3), beta(3), gamma(1), delta(1), epsilon(1). CF(0) has four main subunits: a, b, b' and c.

It is found in the cellular thylakoid membrane. Key component of the proton channel; it plays a direct role in the translocation of protons across the membrane. The polypeptide is ATP synthase subunit a (Trichormus variabilis (strain ATCC 29413 / PCC 7937) (Anabaena variabilis)).